The following is a 422-amino-acid chain: Monoacylglycerol lipase ABHD2 (422 aa).

Topologically, residues 1 to 15 (MSAQLEADVRTMSPE) are cytoplasmic. The chain crosses the membrane as a helical; Signal-anchor for type II membrane protein span at residues 16–36 (MPAMFDGMKLAAVAAVLYVIV). Residues 37-422 (RSLNLKCPTA…HKPQCHQQKE (386 aa)) lie on the Extracellular side of the membrane. The 252-residue stretch at 134–385 (MVICPGIGNH…HGGHLGFFEG (252 aa)) folds into the AB hydrolase-1 domain. Asn-142 carries an N-linked (GlcNAc...) asparagine glycan. Ser-213 serves as the catalytic Nucleophile. Residues Asn-285, Asn-335, and Asn-344 are each glycosylated (N-linked (GlcNAc...) asparagine). Residues Asp-348 and His-379 each act as charge relay system in the active site.

It belongs to the AB hydrolase superfamily. AB hydrolase 4 family.

It localises to the cell membrane. It catalyses the reaction Hydrolyzes glycerol monoesters of long-chain fatty acids.. The enzyme catalyses an acetyl ester + H2O = an aliphatic alcohol + acetate + H(+). It carries out the reaction a triacylglycerol + H2O = a diacylglycerol + a fatty acid + H(+). The catalysed reaction is 2-(5Z,8Z,11Z,14Z-eicosatetraenoyl)-glycerol + H2O = glycerol + (5Z,8Z,11Z,14Z)-eicosatetraenoate + H(+). It catalyses the reaction a butanoate ester + H2O = an aliphatic alcohol + butanoate + H(+). The enzyme catalyses hexadecanoate ester + H2O = an aliphatic alcohol + hexadecanoate + H(+). Acylglycerol lipase activity is activated upon binding to progesterone. In terms of biological role, progesterone-dependent acylglycerol lipase that catalyzes hydrolysis of endocannabinoid arachidonoylglycerol (AG) from cell membrane. Acts as a progesterone receptor: progesterone-binding activates the acylglycerol lipase activity, mediating degradation of 1-arachidonoylglycerol (1AG) and 2-arachidonoylglycerol (2AG) to glycerol and arachidonic acid (AA). Also displays an ester hydrolase activity against acetyl ester, butanoate ester and hexadecanoate ester. Plays a key role in sperm capacitation in response to progesterone by mediating degradation of 2AG, an inhibitor of the sperm calcium channel CatSper, leading to calcium influx via CatSper and sperm activation. May also play a role in smooth muscle cells migration. In Danio rerio (Zebrafish), this protein is Monoacylglycerol lipase ABHD2 (abhd2b).